A 277-amino-acid polypeptide reads, in one-letter code: Phosphatidylglycerol--prolipoprotein diacylglyceryl transferase (277 aa).

4 consecutive transmembrane segments (helical) span residues 18–38, 51–71, 89–109, and 116–136; these read ISVK…LLLA, IIVD…RIYY, IWHG…TAII, and ISFW…QAIG. An a 1,2-diacyl-sn-glycero-3-phospho-(1'-sn-glycerol)-binding site is contributed by arginine 137. A run of 3 helical transmembrane segments spans residues 177–197, 205–225, and 235–255; these read QPTF…LLII, GELF…IEGM, and FRVS…IIIY.

This sequence belongs to the Lgt family.

It localises to the cell membrane. It catalyses the reaction L-cysteinyl-[prolipoprotein] + a 1,2-diacyl-sn-glycero-3-phospho-(1'-sn-glycerol) = an S-1,2-diacyl-sn-glyceryl-L-cysteinyl-[prolipoprotein] + sn-glycerol 1-phosphate + H(+). The protein operates within protein modification; lipoprotein biosynthesis (diacylglyceryl transfer). Functionally, catalyzes the transfer of the diacylglyceryl group from phosphatidylglycerol to the sulfhydryl group of the N-terminal cysteine of a prolipoprotein, the first step in the formation of mature lipoproteins. The sequence is that of Phosphatidylglycerol--prolipoprotein diacylglyceryl transferase from Listeria monocytogenes serovar 1/2a (strain ATCC BAA-679 / EGD-e).